The sequence spans 981 residues: Ephrin type-A receptor 3 (981 aa).

An N-terminal signal peptide occupies residues 1–20; the sequence is MALFRIYSFLAPFHILVLCQ. The Extracellular segment spans residues 21–545; the sequence is ALRNYPDNEV…LAVGDPNQQT (525 aa). The Eph LBD domain maps to 29–210; that stretch reads EVTLLDSMSA…FYKRCPLAVL (182 aa). Fibronectin type-III domains are found at residues 328-441 and 442-533; these read PPSA…TSQT and VSVI…TSHE. 4 N-linked (GlcNAc...) asparagine glycosylation sites follow: asparagine 340, asparagine 410, asparagine 435, and asparagine 485. The chain crosses the membrane as a helical span at residues 546-566; it reads ILAISVAGGAVLLVLLVACFI. The Cytoplasmic segment spans residues 567–981; sequence VSGRRCGYIK…QAHHGTQVQV (415 aa). Phosphotyrosine; by autocatalysis is present on residues tyrosine 601 and tyrosine 607. The region spanning 626-887 is the Protein kinase domain; the sequence is IRIERVIGAG…QIVNTLDRLI (262 aa). ATP-binding positions include 633–638, lysine 658, and 705–711; these read GAGEFG and EYMENGS. Tyrosine 706 carries the phosphotyrosine; by autocatalysis modification. The Proton acceptor role is filled by aspartate 751. 755–756 is a binding site for ATP; that stretch reads RN. Phosphotyrosine; by autocatalysis occurs at positions 784 and 927. An SAM domain is found at 910–974; the sequence is AAVNTVEDWL…LSSIQCLQAH (65 aa). The PDZ-binding signature appears at 979–981; it reads VQV.

It belongs to the protein kinase superfamily. Tyr protein kinase family. Ephrin receptor subfamily. As to quaternary structure, heterotetramer upon binding of the ligand. The heterotetramer is composed of an ephrin dimer and a receptor dimer. Oligomerization is probably required to induce biological responses. Post-translationally, autophosphorylates upon activation by efna5. As to expression, widely expressed in the developing zebrafish nervous system.

The protein localises to the cell membrane. The catalysed reaction is L-tyrosyl-[protein] + ATP = O-phospho-L-tyrosyl-[protein] + ADP + H(+). Functionally, receptor tyrosine kinase which binds promiscuously membrane-bound ephrin family ligands residing on adjacent cells, leading to contact-dependent bidirectional signaling into neighboring cells. The signaling pathway downstream of the receptor is referred to as forward signaling while the signaling pathway downstream of the ephrin ligand is referred to as reverse signaling. Highly promiscuous for ephrin-A ligands it binds preferentially efna5. Upon activation by efna5 regulates cell-cell adhesion, cytoskeletal organization and cell migration. Plays a role in cardiac cells migration and differentiation probably through activation by efna1. Involved in the retinotectal mapping of neurons. May also control the segregation but not the guidance of motor and sensory axons during neuromuscular circuit development. The polypeptide is Ephrin type-A receptor 3 (epha3) (Danio rerio (Zebrafish)).